The chain runs to 543 residues: Telomerase Cajal body protein 1 homolog (543 aa).

The interval 95-128 is disordered; sequence GRPKNAVESPHAGVPMETSLAAEEEANGDEEEES. Acidic residues predominate over residues 116–127; the sequence is AEEEANGDEEEE. WD repeat units lie at residues 237-283, 291-329, and 378-421; these read PEGG…LRCS, DEVMAAISLAFSHDGEQIYAGYKRCIKIFDTSRPGRFCD, and GHKG…QPLV.

Belongs to the TCAB1 family.

It localises to the nucleus. The protein localises to the cajal body. RNA chaperone that plays a key role in Cajal body formation. Specifically recognizes and binds the Cajal body box (CAB box) present in both small Cajal body RNAs (scaRNAs). Probably acts by mediating localization of scaRNAs to Cajal bodies. In Drosophila melanogaster (Fruit fly), this protein is Telomerase Cajal body protein 1 homolog.